The primary structure comprises 668 residues: tRNA 5-methylaminomethyl-2-thiouridine biosynthesis bifunctional protein MnmC (668 aa).

The tRNA (mnm(5)s(2)U34)-methyltransferase stretch occupies residues 1 to 245; it reads MKHYSIQPAN…KREMLCGVME (245 aa). The interval 270–668 is FAD-dependent cmnm(5)s(2)U34 oxidoreductase; it reads IGGGIACALL…LLKGKAVKAG (399 aa).

The protein in the N-terminal section; belongs to the methyltransferase superfamily. tRNA (mnm(5)s(2)U34)-methyltransferase family. In the C-terminal section; belongs to the DAO family. The cofactor is FAD.

It localises to the cytoplasm. It catalyses the reaction 5-aminomethyl-2-thiouridine(34) in tRNA + S-adenosyl-L-methionine = 5-methylaminomethyl-2-thiouridine(34) in tRNA + S-adenosyl-L-homocysteine + H(+). Its function is as follows. Catalyzes the last two steps in the biosynthesis of 5-methylaminomethyl-2-thiouridine (mnm(5)s(2)U) at the wobble position (U34) in tRNA. Catalyzes the FAD-dependent demodification of cmnm(5)s(2)U34 to nm(5)s(2)U34, followed by the transfer of a methyl group from S-adenosyl-L-methionine to nm(5)s(2)U34, to form mnm(5)s(2)U34. In Shigella boydii serotype 18 (strain CDC 3083-94 / BS512), this protein is tRNA 5-methylaminomethyl-2-thiouridine biosynthesis bifunctional protein MnmC.